Reading from the N-terminus, the 702-residue chain is Phosphoglycerol transferase I (702 aa).

3 consecutive transmembrane segments (helical) span residues 5 to 24 (LLVSLLLLLWLLVASPRLAW), 73 to 95 (GYIAVFVGMLLLSLSPLLLVRIR), and 102 to 124 (GGGAVFAGFVGMLLVGIAASPLY).

This sequence belongs to the OpgB family.

The protein localises to the cell inner membrane. It catalyses the reaction a phosphatidylglycerol + a membrane-derived-oligosaccharide D-glucose = a 1,2-diacyl-sn-glycerol + a membrane-derived-oligosaccharide 6-(glycerophospho)-D-glucose.. The protein operates within glycan metabolism; osmoregulated periplasmic glucan (OPG) biosynthesis. Functionally, transfers a phosphoglycerol residue from phosphatidylglycerol to the membrane-bound nascent glucan backbones. The sequence is that of Phosphoglycerol transferase I from Xanthomonas axonopodis pv. citri (strain 306).